The following is a 197-amino-acid chain: Guanylate kinase (197 aa).

The Guanylate kinase-like domain occupies 9–188 (GRLVVFSAPS…AVEAVILAIS (180 aa)). 16-23 (APSGTGKS) is an ATP binding site.

It belongs to the guanylate kinase family.

The protein resides in the cytoplasm. The enzyme catalyses GMP + ATP = GDP + ADP. Essential for recycling GMP and indirectly, cGMP. This Chlorobium luteolum (strain DSM 273 / BCRC 81028 / 2530) (Pelodictyon luteolum) protein is Guanylate kinase.